The following is a 286-amino-acid chain: MKIRVPATSANLGPGFDSMGIAVSKYLEVDILEERDQWFIEHDLGDIPNDDSNLLIQTALRLAPNIPAHRLKMTSDIPLARGLGSSSSVIVAGIELANQLGHLNLTDDRKLAIATRIEGHPDNVAPAIFGQLVIASQIGKDVDYIIAPFPDLSLVCFIPDYELKTSDSRDVLPKQLSYKQAVAASSVANLAIAALLTGNLKKAGRAIENDQFHEIYRQRLVREFQPIKRAAAANGAYATYLSGAGPAIMVMCPNKKKMAIYEAIEQLGLIGQLVSLELDRQGLCLV.

Position 78–88 (78–88 (PLARGLGSSSS)) interacts with ATP.

The protein belongs to the GHMP kinase family. Homoserine kinase subfamily.

It localises to the cytoplasm. The catalysed reaction is L-homoserine + ATP = O-phospho-L-homoserine + ADP + H(+). It participates in amino-acid biosynthesis; L-threonine biosynthesis; L-threonine from L-aspartate: step 4/5. Its function is as follows. Catalyzes the ATP-dependent phosphorylation of L-homoserine to L-homoserine phosphate. This chain is Homoserine kinase, found in Streptococcus equi subsp. equi (strain 4047).